The primary structure comprises 231 residues: Lactate utilization protein C (231 aa).

It belongs to the LutC/YkgG family.

In terms of biological role, is involved in L-lactate degradation and allows cells to grow with lactate as the sole carbon source. The chain is Lactate utilization protein C from Macrococcus caseolyticus (strain JCSC5402) (Macrococcoides caseolyticum).